Here is a 283-residue protein sequence, read N- to C-terminus: Phospholipid phosphatase 1 (283 aa).

At 1-6 (MFDKTR) the chain is on the cytoplasmic side. The PDZ-binding; involved in localization to the apical cell membrane signature appears at 5–7 (TRL). Residues 7–27 (LPYVALDVICVLLAGLPFAIL) traverse the membrane as a helical segment. Topologically, residues 28 to 53 (TSRHTPFQRGIFCNDDSIKYPYKEDT) are extracellular. A helical membrane pass occupies residues 54–74 (IPYALLGGIVIPFCIIVMSIG). Topologically, residues 75 to 88 (ESLSVYFNVLHSNS) are cytoplasmic. Residues 89–109 (FVGNPYIATIYKAVGAFLFGV) traverse the membrane as a helical segment. The Extracellular segment spans residues 110–164 (SASQSLTDIAKYTIGSLRPHFLAICNPDWSKINCSDGYIEDYICQGNEEKVKEGR). Residues 120–128 (KYTIGSLRP) are phosphatase sequence motif I. Asn-142 is a glycosylation site (N-linked (GlcNAc...) asparagine). A helical transmembrane segment spans residues 165–185 (LSFYSGHSSFSMYCMLFVALY). The phosphatase sequence motif II stretch occupies residues 168-171 (YSGH). His-171 serves as the catalytic Proton donors. Residues 186-199 (LQARMKGDWARLLR) lie on the Cytoplasmic side of the membrane. The helical transmembrane segment at 200 to 220 (PMLQFGLIAFSIYVGLSRVSD) threads the bilayer. The interval 216–227 (SRVSDYKHHWSD) is phosphatase sequence motif III. Residues 221 to 229 (YKHHWSDVT) are Extracellular-facing. Residue His-223 is the Nucleophile of the active site. The helical transmembrane segment at 230–250 (VGLIQGAAMAILVALYVSDFF) threads the bilayer. The Cytoplasmic segment spans residues 251 to 283 (KDTHSYKERKEEDPHTTLHETASSRNYSTNHEP). Residues 260 to 283 (KEEDPHTTLHETASSRNYSTNHEP) form a disordered region. A compositionally biased stretch (polar residues) spans 269–283 (HETASSRNYSTNHEP).

The protein belongs to the PA-phosphatase related phosphoesterase family. As to quaternary structure, forms functional homodimers and homooligomers that are not required for substrate recognition and catalytic activity. Can also form heterooligomers with PLPP2 and PLPP3. Post-translationally, N-glycosylated. N-linked sugars are of the complex type. N-glycosylation is not required for the phosphatase activity. In terms of tissue distribution, widely expressed. Highly expressed in kidney and lung. Almost undetectable in brain, heart, bone, muscle or spleen.

The protein localises to the cell membrane. Its subcellular location is the apical cell membrane. The protein resides in the membrane raft. It is found in the membrane. It localises to the caveola. It catalyses the reaction a 1,2-diacyl-sn-glycero-3-phosphate + H2O = a 1,2-diacyl-sn-glycerol + phosphate. The enzyme catalyses 1,2-dihexadecanoyl-sn-glycero-3-phosphate + H2O = 1,2-dihexadecanoyl-sn-glycerol + phosphate. It carries out the reaction 1,2-di-(9Z-octadecenoyl)-sn-glycero-3-phosphate + H2O = 1,2-di-(9Z-octadecenoyl)-sn-glycerol + phosphate. The catalysed reaction is a monoacyl-sn-glycero-3-phosphate + H2O = a monoacylglycerol + phosphate. It catalyses the reaction (9Z)-octadecenoyl-sn-glycero-3-phosphate + H2O = (9Z-octadecenoyl)-glycerol + phosphate. The enzyme catalyses a 1-acyl-sn-glycero-3-phosphate + H2O = a 1-acyl-sn-glycerol + phosphate. It carries out the reaction 1-(9Z-octadecenoyl)-sn-glycero-3-phosphate + H2O = 1-(9Z-octadecenoyl)-sn-glycerol + phosphate. The catalysed reaction is a 1,2-diacyl-sn-glycerol 3-diphosphate + H2O = a 1,2-diacyl-sn-glycero-3-phosphate + phosphate + H(+). It catalyses the reaction sphing-4-enine 1-phosphate + H2O = sphing-4-enine + phosphate. The enzyme catalyses an N-acylsphing-4-enine 1-phosphate + H2O = an N-acylsphing-4-enine + phosphate. It carries out the reaction N-(octanoyl)-sphing-4-enine-1-phosphate + H2O = N-octanoylsphing-4-enine + phosphate. The catalysed reaction is N-(9Z-octadecenoyl)-ethanolamine phosphate + H2O = N-(9Z-octadecenoyl) ethanolamine + phosphate. It catalyses the reaction 1-hexadecanoyl-2-(9Z-octadecenoyl)-sn-glycero-3-phosphate + H2O = 1-hexadecanoyl-2-(9Z-octadecenoyl)-sn-glycerol + phosphate. The protein operates within lipid metabolism; phospholipid metabolism. Magnesium-independent phospholipid phosphatase. Insensitive to N-ethylmaleimide. Magnesium-independent phospholipid phosphatase of the plasma membrane that catalyzes the dephosphorylation of a variety of glycerolipid and sphingolipid phosphate esters including phosphatidate/PA, lysophosphatidate/LPA, diacylglycerol pyrophosphate/DGPP, sphingosine 1-phosphate/S1P and ceramide 1-phosphate/C1P. Also acts on N-oleoyl ethanolamine phosphate/N-(9Z-octadecenoyl)-ethanolamine phosphate, a potential physiological compound. Through its extracellular phosphatase activity allows both the hydrolysis and the cellular uptake of these bioactive lipid mediators from the milieu, regulating signal transduction in different cellular processes. It is for instance essential for the extracellular hydrolysis of S1P and subsequent conversion into intracellular S1P. Involved in the regulation of inflammation, platelets activation, cell proliferation and migration among other processes. May also have an intracellular activity to regulate phospholipid-mediated signaling pathways. The polypeptide is Phospholipid phosphatase 1 (Mus musculus (Mouse)).